The primary structure comprises 195 residues: Putative NADH dehydrogenase/NAD(P)H nitroreductase Bcep18194_B1060 (195 aa).

Belongs to the nitroreductase family. HadB/RutE subfamily. Requires FMN as cofactor.

This is Putative NADH dehydrogenase/NAD(P)H nitroreductase Bcep18194_B1060 from Burkholderia lata (strain ATCC 17760 / DSM 23089 / LMG 22485 / NCIMB 9086 / R18194 / 383).